The chain runs to 1387 residues: DNA-directed RNA polymerase subunit beta'' (1387 aa).

Cys-220, Cys-291, Cys-298, and Cys-301 together coordinate Zn(2+).

It belongs to the RNA polymerase beta' chain family. RpoC2 subfamily. In plastids the minimal PEP RNA polymerase catalytic core is composed of four subunits: alpha, beta, beta', and beta''. When a (nuclear-encoded) sigma factor is associated with the core the holoenzyme is formed, which can initiate transcription. Zn(2+) serves as cofactor.

It is found in the plastid. The protein localises to the chloroplast. The catalysed reaction is RNA(n) + a ribonucleoside 5'-triphosphate = RNA(n+1) + diphosphate. DNA-dependent RNA polymerase catalyzes the transcription of DNA into RNA using the four ribonucleoside triphosphates as substrates. The polypeptide is DNA-directed RNA polymerase subunit beta'' (Carica papaya (Papaya)).